The primary structure comprises 102 residues: Large ribosomal subunit protein uL24 (102 aa).

The protein belongs to the universal ribosomal protein uL24 family. Part of the 50S ribosomal subunit.

Its function is as follows. One of two assembly initiator proteins, it binds directly to the 5'-end of the 23S rRNA, where it nucleates assembly of the 50S subunit. Functionally, one of the proteins that surrounds the polypeptide exit tunnel on the outside of the subunit. This is Large ribosomal subunit protein uL24 from Polynucleobacter asymbioticus (strain DSM 18221 / CIP 109841 / QLW-P1DMWA-1) (Polynucleobacter necessarius subsp. asymbioticus).